Consider the following 101-residue polypeptide: MLTDPAEEAFLPNFLLLGAGTALVLCLVFFLYQKLDQSQFAVIKLGIWGSAVGLLMDTISLWNLPLIFPALSKGQVIAFTIWMVCAYCMYLLIPLILSHKK.

A run of 3 helical transmembrane segments spans residues 10–32 (FLPN…FFLY), 45–67 (LGIW…LPLI), and 77–99 (IAFT…ILSH).

It is found in the cell membrane. This is an uncharacterized protein from Bacillus subtilis (strain 168).